The chain runs to 80 residues: Exodeoxyribonuclease 7 small subunit (80 aa).

It belongs to the XseB family. As to quaternary structure, heterooligomer composed of large and small subunits.

It is found in the cytoplasm. The catalysed reaction is Exonucleolytic cleavage in either 5'- to 3'- or 3'- to 5'-direction to yield nucleoside 5'-phosphates.. Bidirectionally degrades single-stranded DNA into large acid-insoluble oligonucleotides, which are then degraded further into small acid-soluble oligonucleotides. This chain is Exodeoxyribonuclease 7 small subunit, found in Erwinia tasmaniensis (strain DSM 17950 / CFBP 7177 / CIP 109463 / NCPPB 4357 / Et1/99).